Reading from the N-terminus, the 476-residue chain is Cytochrome c oxidase subunit 1 (476 aa).

The helical transmembrane segment at 19–39 threads the bilayer; the sequence is LYYLWFSFLFGIYGFLLSVIL. E42 is a binding site for Ca(2+). Transmembrane regions (helical) follow at residues 61–81, 105–125, 144–164, 194–214, 240–260, 278–298, 309–329, and 345–365; these read MIFT…GLFG, ISLL…AAEF, LSPV…IASI, LIIT…GVLM, LLWF…FGII, MILA…HHMY, FFTS…FNWL, and LLSL…VILG. H66 contributes to the Fe(II)-heme a binding site. H246 is a Cu cation binding site. Positions 246-250 form a cross-link, 1'-histidyl-3'-tyrosine (His-Tyr); it reads HPEVY. Y250 serves as a coordination point for O2. Cu cation contacts are provided by H295 and H296. The Mg(2+) site is built by H374 and D375. A run of 2 helical transmembrane segments spans residues 379 to 399 and 415 to 435; these read VIAH…FTSV and TIIV…FLPM. Position 382 (H382) interacts with heme a3. H384 lines the Fe(II)-heme a pocket. P448 lines the Ca(2+) pocket. Residues 455 to 475 traverse the membrane as a helical segment; that stretch reads NGWNMICSIGSTMTLFGLLIF.

This sequence belongs to the heme-copper respiratory oxidase family. As to quaternary structure, component of the cytochrome c oxidase (complex IV, CIV), a multisubunit enzyme composed of a catalytic core of 3 subunits and several supernumerary subunits. The complex exists as a monomer or a dimer and forms supercomplexes (SCs) in the inner mitochondrial membrane with ubiquinol-cytochrome c oxidoreductase (cytochrome b-c1 complex, complex III, CIII). Heme is required as a cofactor. Requires Cu cation as cofactor.

It is found in the mitochondrion inner membrane. It catalyses the reaction 4 Fe(II)-[cytochrome c] + O2 + 8 H(+)(in) = 4 Fe(III)-[cytochrome c] + 2 H2O + 4 H(+)(out). Its pathway is energy metabolism; oxidative phosphorylation. Functionally, component of the cytochrome c oxidase, the last enzyme in the mitochondrial electron transport chain which drives oxidative phosphorylation. The respiratory chain contains 3 multisubunit complexes succinate dehydrogenase (complex II, CII), ubiquinol-cytochrome c oxidoreductase (cytochrome b-c1 complex, complex III, CIII) and cytochrome c oxidase (complex IV, CIV), that cooperate to transfer electrons derived from NADH and succinate to molecular oxygen, creating an electrochemical gradient over the inner membrane that drives transmembrane transport and the ATP synthase. Cytochrome c oxidase is the component of the respiratory chain that catalyzes the reduction of oxygen to water. Electrons originating from reduced cytochrome c in the intermembrane space (IMS) are transferred via the dinuclear copper A center (CU(A)) of subunit 2 and heme A of subunit 1 to the active site in subunit 1, a binuclear center (BNC) formed by heme A3 and copper B (CU(B)). The BNC reduces molecular oxygen to 2 water molecules using 4 electrons from cytochrome c in the IMS and 4 protons from the mitochondrial matrix. This Plasmodium chabaudi protein is Cytochrome c oxidase subunit 1 (COI).